A 558-amino-acid polypeptide reads, in one-letter code: Formate--tetrahydrofolate ligase (558 aa).

An ATP-binding site is contributed by 66-73 (TPAGEGKT).

It belongs to the formate--tetrahydrofolate ligase family.

The catalysed reaction is (6S)-5,6,7,8-tetrahydrofolate + formate + ATP = (6R)-10-formyltetrahydrofolate + ADP + phosphate. Its pathway is one-carbon metabolism; tetrahydrofolate interconversion. The protein is Formate--tetrahydrofolate ligase of Neisseria gonorrhoeae (strain ATCC 700825 / FA 1090).